The following is a 641-amino-acid chain: SUMO-activating enzyme subunit 2-B (641 aa).

ATP-binding positions include 24 to 29 (GAGGIG), Asp-48, 56 to 59 (NLNR), Lys-72, 95 to 96 (SI), and 117 to 122 (DNNAAR). Residues Cys-158 and Cys-161 each contribute to the Zn(2+) site. The active-site Glycyl thioester intermediate is the Cys-173. Zn(2+) is bound by residues Cys-439 and Cys-442. The segment at 546 to 641 (GDVPEKGPQK…EEDDDIIALD (96 aa)) is disordered. The segment covering 548–561 (VPEKGPQKPPEESV) has biased composition (basic and acidic residues). A compositionally biased stretch (polar residues) spans 562–579 (KNITNGSDDGAQPSTSKA). 2 stretches are compositionally biased toward acidic residues: residues 582 to 594 (QDDV…DEES) and 630 to 641 (PVEEDDDIIALD).

Belongs to the ubiquitin-activating E1 family. Heterodimer of sae1 and uba2/sae2. The heterodimer corresponds to the two domains that are encoded on a single polypeptide chain in ubiquitin-activating enzyme E1. Interacts with ube2i.

The protein localises to the nucleus. The protein operates within protein modification; protein sumoylation. Its function is as follows. The heterodimer acts as an E1 ligase for sumo1, sumo2, and sumo3. It mediates ATP-dependent activation of sumo proteins followed by formation of a thioester bond between a sumo protein and a conserved active site cysteine residue on uba2/sae2. The protein is SUMO-activating enzyme subunit 2-B (uba2-b) of Xenopus laevis (African clawed frog).